The sequence spans 608 residues: 1-deoxy-D-xylulose-5-phosphate synthase (608 aa).

Residues His66 and 107–109 (GHA) each bind thiamine diphosphate. Mg(2+) is bound at residue Asp138. Residues 139-140 (GA), Asn167, Phe277, and Glu350 contribute to the thiamine diphosphate site. A Mg(2+)-binding site is contributed by Asn167.

Belongs to the transketolase family. DXPS subfamily. As to quaternary structure, homodimer. It depends on Mg(2+) as a cofactor. Requires thiamine diphosphate as cofactor.

The catalysed reaction is D-glyceraldehyde 3-phosphate + pyruvate + H(+) = 1-deoxy-D-xylulose 5-phosphate + CO2. Its pathway is metabolic intermediate biosynthesis; 1-deoxy-D-xylulose 5-phosphate biosynthesis; 1-deoxy-D-xylulose 5-phosphate from D-glyceraldehyde 3-phosphate and pyruvate: step 1/1. Catalyzes the acyloin condensation reaction between C atoms 2 and 3 of pyruvate and glyceraldehyde 3-phosphate to yield 1-deoxy-D-xylulose-5-phosphate (DXP). The protein is 1-deoxy-D-xylulose-5-phosphate synthase of Thermotoga sp. (strain RQ2).